The following is a 498-amino-acid chain: POTE ankyrin domain family member A (498 aa).

ANK repeat units lie at residues 98–127 (KKRTALHLACANGNSEVVSLLLDRQCQLHV), 131–160 (KKRTALIKAVQCQEDECALMLLQHGTDPNL), 164–193 (YGNTALHYAVYNEDKLMAKTLLLYGADIES), 197–226 (GGLTPLLLAVHGQKQRMVKFLIKKKANLNA), and 230–259 (FGRTALILAVRCGSASIVSLLLQQNIDVFS). The tract at residues 289 to 410 (NQMPNNSSGN…SNEKNKVKSQ (122 aa)) is disordered. The segment covering 290 to 302 (QMPNNSSGNSNPE) has biased composition (polar residues). The span at 303-338 (QDLKLTSEEEPQRLKGSENSQHEKVTQEPDINKDCD) shows a compositional bias: basic and acidic residues. Positions 348 to 359 (HGSNNVGLSENL) are enriched in polar residues. Positions 392–406 (EEYHRPEKKSNEKNK) are enriched in basic and acidic residues. The stretch at 469–497 (EHLLELKNSHYEQLTVEVEQMENMVHVLQ) forms a coiled coil.

Belongs to the POTE family.

This is POTE ankyrin domain family member A (POTEA) from Homo sapiens (Human).